We begin with the raw amino-acid sequence, 109 residues long: Nucleoid-associated protein VIBHAR_03086 (109 aa).

Disordered stretches follow at residues 1 to 21 (MFGK…QDRM) and 88 to 109 (QKEK…KMPF).

Belongs to the YbaB/EbfC family. As to quaternary structure, homodimer.

It localises to the cytoplasm. The protein localises to the nucleoid. Its function is as follows. Binds to DNA and alters its conformation. May be involved in regulation of gene expression, nucleoid organization and DNA protection. In Vibrio campbellii (strain ATCC BAA-1116), this protein is Nucleoid-associated protein VIBHAR_03086.